The chain runs to 360 residues: Phospho-N-acetylmuramoyl-pentapeptide-transferase (360 aa).

Helical transmembrane passes span 3 to 23 (SILV…PYLI), 52 to 72 (MGGV…HLTV), 81 to 101 (GLLV…DDFI), 115 to 135 (AKLV…MQFA), 153 to 173 (ITVI…AISG), 187 to 207 (LAGG…FWQF), 230 to 250 (IALV…WNAA), 254 to 274 (IFMG…LSMV), 282 to 302 (IIIG…IVVF), and 333 to 353 (FWVL…ADWL).

It belongs to the glycosyltransferase 4 family. MraY subfamily. The cofactor is Mg(2+).

It is found in the cell membrane. The enzyme catalyses UDP-N-acetyl-alpha-D-muramoyl-L-alanyl-gamma-D-glutamyl-meso-2,6-diaminopimeloyl-D-alanyl-D-alanine + di-trans,octa-cis-undecaprenyl phosphate = di-trans,octa-cis-undecaprenyl diphospho-N-acetyl-alpha-D-muramoyl-L-alanyl-D-glutamyl-meso-2,6-diaminopimeloyl-D-alanyl-D-alanine + UMP. It participates in cell wall biogenesis; peptidoglycan biosynthesis. Functionally, catalyzes the initial step of the lipid cycle reactions in the biosynthesis of the cell wall peptidoglycan: transfers peptidoglycan precursor phospho-MurNAc-pentapeptide from UDP-MurNAc-pentapeptide onto the lipid carrier undecaprenyl phosphate, yielding undecaprenyl-pyrophosphoryl-MurNAc-pentapeptide, known as lipid I. This Saccharopolyspora erythraea (strain ATCC 11635 / DSM 40517 / JCM 4748 / NBRC 13426 / NCIMB 8594 / NRRL 2338) protein is Phospho-N-acetylmuramoyl-pentapeptide-transferase.